The chain runs to 442 residues: tRNA modification GTPase MnmE (442 aa).

(6S)-5-formyl-5,6,7,8-tetrahydrofolate-binding residues include R21, E79, and K118. Residues 214–367 (GFKIAIIGKP…LKEELQNYLN (154 aa)) enclose the TrmE-type G domain. N224 contacts K(+). GTP-binding positions include 224–229 (NVGKSS), 243–249 (SDIAGTT), and 268–271 (DTAG). Mg(2+) is bound at residue S228. K(+) contacts are provided by S243, I245, and T248. Residue T249 participates in Mg(2+) binding. K442 is a binding site for (6S)-5-formyl-5,6,7,8-tetrahydrofolate.

It belongs to the TRAFAC class TrmE-Era-EngA-EngB-Septin-like GTPase superfamily. TrmE GTPase family. As to quaternary structure, homodimer. Heterotetramer of two MnmE and two MnmG subunits. K(+) is required as a cofactor.

The protein localises to the cytoplasm. Exhibits a very high intrinsic GTPase hydrolysis rate. Involved in the addition of a carboxymethylaminomethyl (cmnm) group at the wobble position (U34) of certain tRNAs, forming tRNA-cmnm(5)s(2)U34. The sequence is that of tRNA modification GTPase MnmE from Campylobacter jejuni subsp. doylei (strain ATCC BAA-1458 / RM4099 / 269.97).